Reading from the N-terminus, the 401-residue chain is Tumor necrosis factor receptor superfamily member 11B (401 aa).

The first 21 residues, 1–21 (MNKWLCCALLVLLDIIEWTTQ), serve as a signal peptide directing secretion. TNFR-Cys repeat units lie at residues 24-62 (LPPK…KTLC), 65-105 (CPDH…NRVC), 107-142 (CEEG…NTVC), and 145-185 (CPDG…DNVC). Cystine bridges form between cysteine 41/cysteine 54, cysteine 44/cysteine 62, cysteine 65/cysteine 80, cysteine 83/cysteine 97, cysteine 87/cysteine 105, cysteine 107/cysteine 118, cysteine 124/cysteine 142, and cysteine 145/cysteine 160. Residue asparagine 98 is glycosylated (N-linked (GlcNAc...) asparagine). Residues asparagine 165 and asparagine 178 are each glycosylated (N-linked (GlcNAc...) asparagine). An intrachain disulfide couples cysteine 166 to cysteine 185. Death domains are found at residues 198–269 (DVTL…MVKK) and 283–365 (RHLG…THSL). A glycan (N-linked (GlcNAc...) asparagine) is linked at asparagine 289.

As to quaternary structure, homodimer. Interacts with TNFSF10 and TNFSF11. In terms of tissue distribution, highly expressed in liver, lung, stomach, intestines and calvaria. Highly expressed in decidua and placenta, and in embryo.

It is found in the secreted. Acts as a decoy receptor for TNFSF11/RANKL and thereby neutralizes its function in osteoclastogenesis. Inhibits the activation of osteoclasts and promotes osteoclast apoptosis in vitro. Bone homeostasis seems to depend on the local ratio between TNFSF11 and TNFRSF11B. May also play a role in preventing arterial calcification. May act as decoy receptor for TNFSF10/TRAIL and protect against apoptosis. TNFSF10/TRAIL binding blocks the inhibition of osteoclastogenesis. This chain is Tumor necrosis factor receptor superfamily member 11B (Tnfrsf11b), found in Mus musculus (Mouse).